The following is a 148-amino-acid chain: DNA-directed RNA polymerase II subunit GRINL1A, isoforms 4/5 (148 aa).

The segment at 1–66 (MATPARAPES…AEFGGAAGNV (66 aa)) is disordered. A compositionally biased stretch (low complexity) spans 53–66 (GLGAAEFGGAAGNV).

The polypeptide is DNA-directed RNA polymerase II subunit GRINL1A, isoforms 4/5 (POLR2M) (Homo sapiens (Human)).